Here is a 712-residue protein sequence, read N- to C-terminus: NADH-quinone oxidoreductase subunit L (712 aa).

17 consecutive transmembrane segments (helical) span residues 4-24 (IILL…RLIT), 28-48 (ALVV…VVFL), 79-99 (LTAI…LYSW), 113-133 (AYKA…LMLV), 138-158 (LVQM…LIGF), 183-203 (FALG…DVIF), 216-236 (FLAW…IGAM), 256-276 (TPVS…FLVC), 290-310 (MMVV…GLVQ), 325-345 (LGYM…FHLL), 346-366 (THAF…HAMH), 385-405 (FAIM…FFSI), 421-441 (IIES…VAAA), 475-495 (AVML…GMVW), 588-608 (LSPF…YIGD), 655-675 (GDGA…IPFF), and 686-706 (YLFH…FWVV).

Belongs to the complex I subunit 5 family. NDH-1 is composed of 14 different subunits. Subunits NuoA, H, J, K, L, M, N constitute the membrane sector of the complex.

The protein resides in the cellular chromatophore membrane. It catalyses the reaction a quinone + NADH + 5 H(+)(in) = a quinol + NAD(+) + 4 H(+)(out). NDH-1 shuttles electrons from NADH, via FMN and iron-sulfur (Fe-S) centers, to quinones in the respiratory chain. The immediate electron acceptor for the enzyme in this species is believed to be ubiquinone. Couples the redox reaction to proton translocation (for every two electrons transferred, four hydrogen ions are translocated across the cytoplasmic membrane), and thus conserves the redox energy in a proton gradient. The sequence is that of NADH-quinone oxidoreductase subunit L (nuoL) from Rhodobacter capsulatus (Rhodopseudomonas capsulata).